Reading from the N-terminus, the 353-residue chain is Uroporphyrinogen decarboxylase (353 aa).

Substrate-binding positions include 30-34 (RQAGR), Asp-79, Tyr-154, Ser-209, and His-332.

The protein belongs to the uroporphyrinogen decarboxylase family. In terms of assembly, homodimer.

The protein resides in the cytoplasm. The enzyme catalyses uroporphyrinogen III + 4 H(+) = coproporphyrinogen III + 4 CO2. It functions in the pathway porphyrin-containing compound metabolism; protoporphyrin-IX biosynthesis; coproporphyrinogen-III from 5-aminolevulinate: step 4/4. Catalyzes the decarboxylation of four acetate groups of uroporphyrinogen-III to yield coproporphyrinogen-III. This is Uroporphyrinogen decarboxylase from Mycobacterium marinum (strain ATCC BAA-535 / M).